The following is a 1007-amino-acid chain: Probable beta-galactosidase A (1007 aa).

Positions 1–18 are cleaved as a signal peptide; the sequence is MKLSSACAIALLAAQAAG. Y96, N140, A141, and E142 together coordinate substrate. N156 carries an N-linked (GlcNAc...) asparagine glycan. Substrate is bound at residue N199. Catalysis depends on E200, which acts as the Proton donor. C205 and C206 are oxidised to a cystine. Substrate is bound at residue Y260. The cysteines at positions 266 and 315 are disulfide-linked. E298 acts as the Nucleophile in catalysis. Y364 lines the substrate pocket. N-linked (GlcNAc...) asparagine glycosylation is found at N373, N402, N422, N478, N522, N622, N739, N760, N777, and N805. The disordered stretch occupies residues 862–881; sequence RQGFHQPEPPSQDWKSSSPL. The N-linked (GlcNAc...) asparagine glycan is linked to N914.

This sequence belongs to the glycosyl hydrolase 35 family.

It localises to the secreted. It catalyses the reaction Hydrolysis of terminal non-reducing beta-D-galactose residues in beta-D-galactosides.. In terms of biological role, cleaves beta-linked terminal galactosyl residues from gangliosides, glycoproteins, and glycosaminoglycans. The protein is Probable beta-galactosidase A (lacA) of Aspergillus phoenicis (Aspergillus saitoi).